The primary structure comprises 292 residues: uncharacterized protein (292 aa).

4 helical membrane-spanning segments follow: residues 17–37 (LFYTFVLVAWLFIGMILFPAL), 135–155 (LIAVLYALIGTPLFLTVIGQL), 166–186 (TTLWIVTIVYIFISAVIYDIV), and 216–236 (FHGVLPYCIVVLGLALITALY). Residues 267–292 (EKSEDKKSIVTSRIEEENEDEISDYE) form a disordered region. Acidic residues predominate over residues 282 to 292 (EENEDEISDYE).

The protein resides in the membrane. This is an uncharacterized protein from Caenorhabditis elegans.